The following is a 793-amino-acid chain: MQVLVTLWCLICTCLVLPVAAKKRTLTASSLVTCMENSQLSANSFDVSFSPDDRSLHYDLDMTTQIDSYIYAYVDVYAYGFKIITENFDVCSMGWKQFCPVHPGNIQIDSIEYIAQKYVKMIPGIAYQVPDIDAYVRLNIYNNVSENLACIQVFFSNGKTVSQIGVKWVTAVIAGIGLLTSAVLSTFGNSTAASHISANTMSLFLYFQSVAVVAMQHVDSVPPIAAAWSENLAWSMGLIRITFMQKIFRWYVEATGGSASLYLTATTMSVLTQRGLDYLKNTSVYKRAENVLYGNSNTLIFRGIKRMGYRMKIENTAIVCTGFTFFVLCGYFLAGFIMACKYSIELCIRCGWMRSDRFYQFRKNWRSVLKGSLLRYIYIGFTQLTILSFWEFTERDSAGVIVIACLFIVLSCGLMAWAAYRTIFFASKSVEMYNNPAALLYGDEYVLNKYGFFYTMFNAKHYWWNALLTTYILVKALFVGFAQASGKTQALAIFIIDLAYFVAIIRYKPYLDRPTNIVNIFICTVTLVNSFLFMFFSNLFNQKYAVSAIMGWVFFIMNAAFSLLLLLMILAFTTIILFSKNPDSRFKPAKDDRASFQKHAIPHEGALNKSVANELMALGNVAKDHTENWEYELKSQEGKSEDNLFGVEYDDEKTGTNSENAESSSKETTRPTFSEKVLRSLSIKRNKSKLGSFKRSAPDKITQQEVSPDRASSSPNSKSYPGVSHTRQESEANNGLINAYEDEQFSLMEPSILEDAASSTQMHAMPARDLSLSSVANAQDVTKKANILDPDYL.

Positions 1–21 are cleaved as a signal peptide; sequence MQVLVTLWCLICTCLVLPVAA. The Lumenal portion of the chain corresponds to 22-163; sequence KKRTLTASSL…FFSNGKTVSQ (142 aa). N-linked (GlcNAc...) asparagine glycosylation occurs at N143. A helical membrane pass occupies residues 164 to 184; that stretch reads IGVKWVTAVIAGIGLLTSAVL. At 185–194 the chain is on the cytoplasmic side; sequence STFGNSTAAS. A helical transmembrane segment spans residues 195 to 215; sequence HISANTMSLFLYFQSVAVVAM. The Lumenal segment spans residues 216-223; the sequence is QHVDSVPP. A helical transmembrane segment spans residues 224 to 244; it reads IAAAWSENLAWSMGLIRITFM. Topologically, residues 245–249 are cytoplasmic; sequence QKIFR. The chain crosses the membrane as a helical span at residues 250–272; sequence WYVEATGGSASLYLTATTMSVLT. Over 273 to 317 the chain is Lumenal; the sequence is QRGLDYLKNTSVYKRAENVLYGNSNTLIFRGIKRMGYRMKIENTA. A glycan (N-linked (GlcNAc...) asparagine) is linked at N281. The helical transmembrane segment at 318–338 threads the bilayer; sequence IVCTGFTFFVLCGYFLAGFIM. Over 339–372 the chain is Cytoplasmic; sequence ACKYSIELCIRCGWMRSDRFYQFRKNWRSVLKGS. A helical membrane pass occupies residues 373-393; the sequence is LLRYIYIGFTQLTILSFWEFT. At 394–397 the chain is on the lumenal side; the sequence is ERDS. The helical transmembrane segment at 398–418 threads the bilayer; sequence AGVIVIACLFIVLSCGLMAWA. Residues 419–461 are Cytoplasmic-facing; the sequence is AYRTIFFASKSVEMYNNPAALLYGDEYVLNKYGFFYTMFNAKH. A helical transmembrane segment spans residues 462–482; sequence YWWNALLTTYILVKALFVGFA. Topologically, residues 483 to 484 are lumenal; sequence QA. Residues 485–505 traverse the membrane as a helical segment; sequence SGKTQALAIFIIDLAYFVAII. At 506–516 the chain is on the cytoplasmic side; sequence RYKPYLDRPTN. A helical transmembrane segment spans residues 517-537; the sequence is IVNIFICTVTLVNSFLFMFFS. Over 538–551 the chain is Lumenal; that stretch reads NLFNQKYAVSAIMG. The chain crosses the membrane as a helical span at residues 552-572; it reads WVFFIMNAAFSLLLLLMILAF. Topologically, residues 573 to 793 are cytoplasmic; it reads TTIILFSKNP…KANILDPDYL (221 aa). S610 is modified (phosphoserine). Residue T626 is modified to Phosphothreonine. Disordered stretches follow at residues 649-674 and 689-731; these read YDDEKTGTNSENAESSSKETTRPTFS and KLGS…QESE. Over residues 701 to 719 the composition is skewed to polar residues; sequence ITQQEVSPDRASSSPNSKS. S771 and S774 each carry phosphoserine.

The protein belongs to the transient receptor potential (TRP) ion channel family.

The protein localises to the endoplasmic reticulum membrane. May be responsible for the transport of FAD into the endoplasmic reticulum lumen, where it is required for oxidative protein folding. In Saccharomyces cerevisiae (strain ATCC 204508 / S288c) (Baker's yeast), this protein is Flavin carrier protein 1 (FLC1).